Reading from the N-terminus, the 437-residue chain is Trigger factor (437 aa).

The 87-residue stretch at 165 to 251 (GDLVVIDFKG…LHTIKEKEKI (87 aa)) folds into the PPIase FKBP-type domain.

It belongs to the FKBP-type PPIase family. Tig subfamily.

It localises to the cytoplasm. It carries out the reaction [protein]-peptidylproline (omega=180) = [protein]-peptidylproline (omega=0). Involved in protein export. Acts as a chaperone by maintaining the newly synthesized protein in an open conformation. Functions as a peptidyl-prolyl cis-trans isomerase. The polypeptide is Trigger factor (Nitratiruptor sp. (strain SB155-2)).